Reading from the N-terminus, the 146-residue chain is Small ribosomal subunit protein uS5 (146 aa).

One can recognise an S5 DRBM domain in the interval 8–71; sequence FQEAIVKIGR…DDAFKSLVTV (64 aa).

Belongs to the universal ribosomal protein uS5 family. As to quaternary structure, part of the 30S ribosomal subunit. Contacts proteins S4 and S8.

Functionally, with S4 and S12 plays an important role in translational accuracy. Located at the back of the 30S subunit body where it stabilizes the conformation of the head with respect to the body. In Aliarcobacter butzleri (strain RM4018) (Arcobacter butzleri), this protein is Small ribosomal subunit protein uS5.